A 481-amino-acid polypeptide reads, in one-letter code: ATP synthase subunit beta, chloroplastic (481 aa).

ATP is bound at residue 161 to 168 (GGAGVGKT).

Belongs to the ATPase alpha/beta chains family. F-type ATPases have 2 components, CF(1) - the catalytic core - and CF(0) - the membrane proton channel. CF(1) has five subunits: alpha(3), beta(3), gamma(1), delta(1), epsilon(1). CF(0) has four main subunits: a(1), b(1), b'(1) and c(9-12).

It localises to the plastid. The protein localises to the chloroplast thylakoid membrane. It catalyses the reaction ATP + H2O + 4 H(+)(in) = ADP + phosphate + 5 H(+)(out). Produces ATP from ADP in the presence of a proton gradient across the membrane. The catalytic sites are hosted primarily by the beta subunits. This is ATP synthase subunit beta, chloroplastic from Mesostigma viride (Green alga).